The following is a 342-amino-acid chain: 4-hydroxy-3-methylbut-2-enyl diphosphate reductase (342 aa).

[4Fe-4S] cluster is bound at residue cysteine 47. Histidine 78 and histidine 111 together coordinate (2E)-4-hydroxy-3-methylbut-2-enyl diphosphate. Positions 78 and 111 each coordinate dimethylallyl diphosphate. Residues histidine 78 and histidine 111 each contribute to the isopentenyl diphosphate site. Cysteine 133 is a binding site for [4Fe-4S] cluster. Residue histidine 161 participates in (2E)-4-hydroxy-3-methylbut-2-enyl diphosphate binding. Histidine 161 lines the dimethylallyl diphosphate pocket. Histidine 161 lines the isopentenyl diphosphate pocket. Glutamate 163 functions as the Proton donor in the catalytic mechanism. Threonine 201 provides a ligand contact to (2E)-4-hydroxy-3-methylbut-2-enyl diphosphate. A [4Fe-4S] cluster-binding site is contributed by cysteine 231. 4 residues coordinate (2E)-4-hydroxy-3-methylbut-2-enyl diphosphate: serine 259, serine 260, asparagine 261, and serine 303. Dimethylallyl diphosphate-binding residues include serine 259, serine 260, asparagine 261, and serine 303. The isopentenyl diphosphate site is built by serine 259, serine 260, asparagine 261, and serine 303.

This sequence belongs to the IspH family. Requires [4Fe-4S] cluster as cofactor.

It catalyses the reaction isopentenyl diphosphate + 2 oxidized [2Fe-2S]-[ferredoxin] + H2O = (2E)-4-hydroxy-3-methylbut-2-enyl diphosphate + 2 reduced [2Fe-2S]-[ferredoxin] + 2 H(+). The enzyme catalyses dimethylallyl diphosphate + 2 oxidized [2Fe-2S]-[ferredoxin] + H2O = (2E)-4-hydroxy-3-methylbut-2-enyl diphosphate + 2 reduced [2Fe-2S]-[ferredoxin] + 2 H(+). It functions in the pathway isoprenoid biosynthesis; dimethylallyl diphosphate biosynthesis; dimethylallyl diphosphate from (2E)-4-hydroxy-3-methylbutenyl diphosphate: step 1/1. Its pathway is isoprenoid biosynthesis; isopentenyl diphosphate biosynthesis via DXP pathway; isopentenyl diphosphate from 1-deoxy-D-xylulose 5-phosphate: step 6/6. Its function is as follows. Catalyzes the conversion of 1-hydroxy-2-methyl-2-(E)-butenyl 4-diphosphate (HMBPP) into a mixture of isopentenyl diphosphate (IPP) and dimethylallyl diphosphate (DMAPP). Acts in the terminal step of the DOXP/MEP pathway for isoprenoid precursor biosynthesis. This is 4-hydroxy-3-methylbut-2-enyl diphosphate reductase from Anaplasma marginale (strain Florida).